The primary structure comprises 201 residues: Peptide deformylase (201 aa).

The segment covering 1 to 17 (MANNFSQLARKSKTNSP) has biased composition (polar residues). The tract at residues 1–24 (MANNFSQLARKSKTNSPIEKVSKE) is disordered. The Fe cation site is built by cysteine 121 and histidine 163. Glutamate 164 is an active-site residue. Residue histidine 167 coordinates Fe cation.

Belongs to the polypeptide deformylase family. Requires Fe(2+) as cofactor.

It carries out the reaction N-terminal N-formyl-L-methionyl-[peptide] + H2O = N-terminal L-methionyl-[peptide] + formate. Its function is as follows. Removes the formyl group from the N-terminal Met of newly synthesized proteins. Requires at least a dipeptide for an efficient rate of reaction. N-terminal L-methionine is a prerequisite for activity but the enzyme has broad specificity at other positions. This chain is Peptide deformylase, found in Prochlorococcus marinus subsp. pastoris (strain CCMP1986 / NIES-2087 / MED4).